Consider the following 388-residue polypeptide: Chorismate synthase (388 aa).

NADP(+) contacts are provided by Arg39 and Arg45. FMN-binding positions include 130 to 132, 251 to 252, Gly296, 311 to 315, and Arg337; these read RSS, NA, and KPIPT.

The protein belongs to the chorismate synthase family. As to quaternary structure, homotetramer. The cofactor is FMNH2.

It catalyses the reaction 5-O-(1-carboxyvinyl)-3-phosphoshikimate = chorismate + phosphate. The protein operates within metabolic intermediate biosynthesis; chorismate biosynthesis; chorismate from D-erythrose 4-phosphate and phosphoenolpyruvate: step 7/7. Its function is as follows. Catalyzes the anti-1,4-elimination of the C-3 phosphate and the C-6 proR hydrogen from 5-enolpyruvylshikimate-3-phosphate (EPSP) to yield chorismate, which is the branch point compound that serves as the starting substrate for the three terminal pathways of aromatic amino acid biosynthesis. This reaction introduces a second double bond into the aromatic ring system. The polypeptide is Chorismate synthase (Geobacillus sp. (strain WCH70)).